A 257-amino-acid chain; its full sequence is MTAFSKHRWRGPVIRRPKTTFGAFLLLFWTWWALLAVFRAFPGIDIYFSQLFFLGTDCDATAAAGSICGGFPYRDSGNFDLLRTIFFRLPYVVAIVMAWKLIECYQQHGATFNAERARKLKVGLGALLIGPVLLVNVILKEHWGRPRPVQTDIFGGALHFVEAGSLAGKCVSNCSFVSGEAASAGWLFCLLLFVPKSLRYALVPPVAAISILTPAMRLSFGAHYLSDVTLGWLSSLVVFAALLALTESQQHQKNSEI.

A run of 6 helical transmembrane segments spans residues 21-41, 85-105, 119-139, 174-194, 201-221, and 225-245; these read FGAFLLLFWTWWALLAVFRAF, IFFRLPYVVAIVMAWKLIECY, KLKVGLGALLIGPVLLVNVIL, CSFVSGEAASAGWLFCLLLFV, ALVPPVAAISILTPAMRLSFG, and LSDVTLGWLSSLVVFAALLAL.

This sequence belongs to the lipid A LpxF 4'-phosphatase family.

Its subcellular location is the cell inner membrane. The protein operates within bacterial outer membrane biogenesis; LPS lipid A biosynthesis. Functionally, probably removes the 4'-phosphate moiety from lipid A species. Not seen to act on other membrane components, nor does it dephosphorylate the 1-phosphate group of lipid A and/or lipid A precursors. This Rhizobium etli (strain ATCC 51251 / DSM 11541 / JCM 21823 / NBRC 15573 / CFN 42) protein is Lipid A 4'-phosphatase.